The following is a 185-amino-acid chain: Chromobox protein homolog 1 (185 aa).

Residues lysine 9 and lysine 33 each participate in a glycyl lysine isopeptide (Lys-Gly) (interchain with G-Cter in SUMO2) cross-link. The region spanning 21–79 is the Chromo 1 domain; sequence YVVEKVLDRRVVKGKVEYLLKWKGFSDEDNTWEPEENLDCPDLIAEFLQSQKTAHETDK. The disordered stretch occupies residues 63-124; sequence LIAEFLQSQK…RGLEPERIIG (62 aa). Basic and acidic residues predominate over residues 73–89; that stretch reads TAHETDKSEGGKRKADS. 2 positions are modified to phosphoserine: serine 89 and serine 91. The span at 96–121 shows a compositional bias: basic and acidic residues; sequence EESKPKKKKEESEKPRGFARGLEPER. Glycyl lysine isopeptide (Lys-Gly) (interchain with G-Cter in SUMO2) cross-links involve residues lysine 99 and lysine 150. The 59-residue stretch at 117–175 folds into the Chromo 2; shadow subtype domain; sequence LEPERIIGATDSSGELMFLMKWKNSDEADLVPAKEANVKCPQVVISFYEERLTWHSYPS. The residue at position 175 (serine 175) is a Phosphoserine.

As to quaternary structure, homodimer. Interacts directly with CHAF1A, EMSY, LBR, TIF1/TIF1A and TRIM28/TIF1B PXVXL motif via the chromoshadow domain. Interacts directly with histone H3 methylated at 'Lys-9' via the chromo domain. Interacts with SUV39H1 and SETDB1, KMT5B and KMT5C. Interacts with PRDM6. Interacts with POGZ. Interacts with CHAMP1. Interacts with INCENP. Interacts with SGO1; the CBX1 homodimer binds to one molecule of SGO1. Interacts with LRIF1 (via PxVxL motif). Interacts with HDGFL2. Interacts with CHD3. Interacts with CHD4. Not phosphorylated. In terms of processing, ubiquitinated. In terms of tissue distribution, expressed in all adult and embryonic tissues.

It localises to the nucleus. In terms of biological role, component of heterochromatin. Recognizes and binds histone H3 tails methylated at 'Lys-9', leading to epigenetic repression. Interaction with lamin B receptor (LBR) can contribute to the association of the heterochromatin with the inner nuclear membrane. This is Chromobox protein homolog 1 (CBX1) from Homo sapiens (Human).